A 271-amino-acid chain; its full sequence is Putative protein FAM220BP (271 aa).

This Homo sapiens (Human) protein is Putative protein FAM220BP (FAM220BP).